The following is a 338-amino-acid chain: Malate dehydrogenase, mitochondrial (338 aa).

Residues 1–24 constitute a mitochondrion transit peptide; sequence MLSALARPAGAALRRSFSTSAQNN. NAD(+) contacts are provided by residues 31-37 and Asp57; that span reads GASGGIG. O-linked (GlcNAc) serine glycosylation is present at Ser33. N6-acetyllysine; alternate occurs at positions 78 and 91. An N6-succinyllysine; alternate mark is found at Lys78 and Lys91. Substrate-binding residues include Arg104 and Arg110. Residues Asn117 and 140 to 142 each bind NAD(+); that span reads ISN. Asn142 lines the substrate pocket. N6-acetyllysine is present on Lys165. Position 176 (Arg176) interacts with substrate. Lys185 bears the N6-acetyllysine; alternate mark. An N6-succinyllysine; alternate modification is found at Lys185. His200 serves as the catalytic Proton acceptor. Position 203 is an N6-succinyllysine (Lys203). 2 positions are modified to N6-acetyllysine; alternate: Lys215 and Lys239. N6-succinyllysine; alternate is present on residues Lys215 and Lys239. An N6-malonyllysine; alternate modification is found at Lys239. Ser246 is subject to Phosphoserine. Met251 is an NAD(+) binding site. N6-succinyllysine is present on Lys269. 5 positions are modified to N6-acetyllysine; alternate: Lys296, Lys301, Lys307, Lys314, and Lys324. N6-succinyllysine; alternate is present on residues Lys296, Lys301, Lys307, Lys314, and Lys324. Position 307 is an N6-malonyllysine; alternate (Lys307). Ser326 carries the post-translational modification Phosphoserine. N6-acetyllysine; alternate is present on residues Lys328, Lys329, and Lys335. Lys328 carries the post-translational modification N6-succinyllysine; alternate. Lys329 carries the post-translational modification N6-malonyllysine; alternate. Lys335 bears the N6-succinyllysine; alternate mark.

It belongs to the LDH/MDH superfamily. MDH type 1 family. In terms of assembly, homodimer. Post-translationally, acetylation is enhanced after treatment either with trichostin A (TCA) or with nicotinamide (NAM) with the appearance of tri- and tetraacetylations. Glucose also increases acetylation.

Its subcellular location is the mitochondrion matrix. It catalyses the reaction (S)-malate + NAD(+) = oxaloacetate + NADH + H(+). With respect to regulation, enzyme activity is enhanced by acetylation. The polypeptide is Malate dehydrogenase, mitochondrial (MDH2) (Bos taurus (Bovine)).